A 228-amino-acid chain; its full sequence is 2-C-methyl-D-erythritol 4-phosphate cytidylyltransferase (228 aa).

Belongs to the IspD/TarI cytidylyltransferase family. IspD subfamily.

The enzyme catalyses 2-C-methyl-D-erythritol 4-phosphate + CTP + H(+) = 4-CDP-2-C-methyl-D-erythritol + diphosphate. It functions in the pathway isoprenoid biosynthesis; isopentenyl diphosphate biosynthesis via DXP pathway; isopentenyl diphosphate from 1-deoxy-D-xylulose 5-phosphate: step 2/6. Its function is as follows. Catalyzes the formation of 4-diphosphocytidyl-2-C-methyl-D-erythritol from CTP and 2-C-methyl-D-erythritol 4-phosphate (MEP). In Geobacillus kaustophilus (strain HTA426), this protein is 2-C-methyl-D-erythritol 4-phosphate cytidylyltransferase.